A 307-amino-acid polypeptide reads, in one-letter code: MVTQDIPAVDIGFTHEDFAALLDQYDYHFNPGDTVVGTVFNLEPRGALIDIGAKTAAFLPVQEMSINRVESPEEVLQPSEMREFFILSDENEDGQLTLSIRRIEYMRAWERVRQLQTEDATVRSEVFATNRGGALVRIEGLRGFIPGSHISTRKAKEDLVGEELPLKFLEVDEDRNRLVLSHRRALVERKMNRLEVGEVVVGAVRGIKPYGAFIDIGGVSGLLHISEISHDHIETPHSVFNVNDEVKVMIIDLDAERGRISLSTKQLEPEPGDMVRNPEVVYEKAEEMAAQYREKLKQQAEGLVVTE.

3 S1 motif domains span residues 32–101 (GDTV…LSIR), 119–183 (DATV…LSHR), and 197–265 (GEVV…LSTK).

The protein belongs to the bacterial ribosomal protein bS1 family.

Binds mRNA. This chain is Small ribosomal subunit protein bS1 (rpsA), found in Synechococcus sp. (strain ATCC 27144 / PCC 6301 / SAUG 1402/1) (Anacystis nidulans).